Here is a 206-residue protein sequence, read N- to C-terminus: Small ribosomal subunit protein uS4 (206 aa).

One can recognise an S4 RNA-binding domain in the interval 96 to 156; it reads TRLDNVVYRM…EKSRTQARIK (61 aa).

This sequence belongs to the universal ribosomal protein uS4 family. As to quaternary structure, part of the 30S ribosomal subunit. Contacts protein S5. The interaction surface between S4 and S5 is involved in control of translational fidelity.

In terms of biological role, one of the primary rRNA binding proteins, it binds directly to 16S rRNA where it nucleates assembly of the body of the 30S subunit. With S5 and S12 plays an important role in translational accuracy. The sequence is that of Small ribosomal subunit protein uS4 from Shewanella halifaxensis (strain HAW-EB4).